Here is a 297-residue protein sequence, read N- to C-terminus: Hydroxysqualene synthase (297 aa).

This sequence belongs to the phytoene/squalene synthase family. HpnC subfamily.

The catalysed reaction is presqualene diphosphate + H2O = hydroxysqualene + diphosphate. The protein operates within secondary metabolite biosynthesis; hopanoid biosynthesis. Involved in the biosynthesis of the hopanoid precursor squalene (SQ) from farnesyl diphosphate (FPP). Catalyzes the second step, the conversion of presqualene diphosphate (PSPP) to hydroxysqualene (HSQ). The chain is Hydroxysqualene synthase from Zymomonas mobilis subsp. mobilis (strain ATCC 31821 / ZM4 / CP4).